Consider the following 305-residue polypeptide: Aurasperone B biosynthesis cluster protein A (305 aa).

The signal sequence occupies residues 1–26 (MSIFFSIRFWPAAISAAILWLPQVLG). Asn-29, Asn-34, Asn-64, Asn-83, Asn-132, Asn-183, Asn-218, and Asn-288 each carry an N-linked (GlcNAc...) asparagine glycan.

This sequence belongs to the bfoA family.

Functionally, part of the gene cluster that mediates the biosynthesis of aurasperone B, a dimeric gamma-naphthopyrone. The first step in the biosynthesis of aurasperone B is the production of gamma-naphthopyrone precursor YWA1 by the non-reducing polyketide synthase albA, via condensation of one acetyl-CoA starter unit with 6 malonyl-CoA units. YWA1 is then methylated by aunE at position C-6 to yield foncesin which is further methylated at position C-8 by aunD to produce fonsecin B. A key enzyme in the biosynthetic pathway is the cytochrome P450 monooxygenase aunB which catalyzes the oxidative dimerization of fonsecin B to aurasperone B. AunB also catalyzes the oxidative dimerization of rubrofusarin B into aurasperone A. The chain is Aurasperone B biosynthesis cluster protein A from Aspergillus niger (strain ATCC 1015 / CBS 113.46 / FGSC A1144 / LSHB Ac4 / NCTC 3858a / NRRL 328 / USDA 3528.7).